A 156-amino-acid chain; its full sequence is 3-dehydroquinate dehydratase (156 aa).

The Proton acceptor role is filled by Tyr24. Positions 76, 82, and 89 each coordinate substrate. The active-site Proton donor is His102. Residues 103–104 (IS) and Arg113 each bind substrate.

It belongs to the type-II 3-dehydroquinase family. Homododecamer.

The enzyme catalyses 3-dehydroquinate = 3-dehydroshikimate + H2O. Its pathway is metabolic intermediate biosynthesis; chorismate biosynthesis; chorismate from D-erythrose 4-phosphate and phosphoenolpyruvate: step 3/7. Its function is as follows. Catalyzes a trans-dehydration via an enolate intermediate. The chain is 3-dehydroquinate dehydratase from Nitrobacter winogradskyi (strain ATCC 25391 / DSM 10237 / CIP 104748 / NCIMB 11846 / Nb-255).